Here is a 128-residue protein sequence, read N- to C-terminus: NADH-quinone oxidoreductase subunit A (128 aa).

The next 3 helical transmembrane spans lie at Phe12–Leu32, Phe66–Trp86, and Leu96–Val116.

It belongs to the complex I subunit 3 family. NDH-1 is composed of 14 different subunits. Subunits NuoA, H, J, K, L, M, N constitute the membrane sector of the complex.

It is found in the cell membrane. It carries out the reaction a quinone + NADH + 5 H(+)(in) = a quinol + NAD(+) + 4 H(+)(out). Its function is as follows. NDH-1 shuttles electrons from NADH, via FMN and iron-sulfur (Fe-S) centers, to quinones in the respiratory chain. The immediate electron acceptor for the enzyme in this species is believed to be ubiquinone. Couples the redox reaction to proton translocation (for every two electrons transferred, four hydrogen ions are translocated across the cytoplasmic membrane), and thus conserves the redox energy in a proton gradient. This is NADH-quinone oxidoreductase subunit A from Baumannia cicadellinicola subsp. Homalodisca coagulata.